We begin with the raw amino-acid sequence, 184 residues long: MQTTIRGELVEPYAEALLSLAQSHNLADQFQQDSGLILDLLAASAELQEFLANPLINPDAKKNVLRQLTVDKVHGYFLNFLMLLVDRRRINLLAAICQQYRALLRKLRNIVLAEVISAVELTEQQRHAVVEKVKTMTGAADVELAIAIDPELLGGVVIKVGSQIFDASLRGQLRRLSVSLAQPV.

Belongs to the ATPase delta chain family. In terms of assembly, F-type ATPases have 2 components, F(1) - the catalytic core - and F(0) - the membrane proton channel. F(1) has five subunits: alpha(3), beta(3), gamma(1), delta(1), epsilon(1). CF(0) has four main subunits: a(1), b(1), b'(1) and c(10-14). The alpha and beta chains form an alternating ring which encloses part of the gamma chain. F(1) is attached to F(0) by a central stalk formed by the gamma and epsilon chains, while a peripheral stalk is formed by the delta, b and b' chains.

The protein resides in the cellular thylakoid membrane. Functionally, f(1)F(0) ATP synthase produces ATP from ADP in the presence of a proton or sodium gradient. F-type ATPases consist of two structural domains, F(1) containing the extramembraneous catalytic core and F(0) containing the membrane proton channel, linked together by a central stalk and a peripheral stalk. During catalysis, ATP synthesis in the catalytic domain of F(1) is coupled via a rotary mechanism of the central stalk subunits to proton translocation. Its function is as follows. This protein is part of the stalk that links CF(0) to CF(1). It either transmits conformational changes from CF(0) to CF(1) or is implicated in proton conduction. The chain is ATP synthase subunit delta from Synechococcus sp. (strain PCC 6716).